Reading from the N-terminus, the 223-residue chain is UPF0173 metal-dependent hydrolase Amet_4625 (223 aa).

The protein belongs to the UPF0173 family.

This is UPF0173 metal-dependent hydrolase Amet_4625 from Alkaliphilus metalliredigens (strain QYMF).